The chain runs to 398 residues: S-adenosylmethionine synthase (398 aa).

Histidine 16 is a binding site for ATP. Residue aspartate 18 participates in Mg(2+) binding. Glutamate 51 contributes to the K(+) binding site. Residues glutamate 64 and glutamine 108 each contribute to the L-methionine site. A flexible loop region spans residues glutamine 108–alanine 118. ATP-binding positions include aspartate 176–lysine 178, lysine 242–phenylalanine 243, aspartate 251, arginine 257–lysine 258, alanine 274, and lysine 278. Residue aspartate 251 participates in L-methionine binding. Lysine 282 lines the L-methionine pocket.

This sequence belongs to the AdoMet synthase family. As to quaternary structure, homotetramer; dimer of dimers. Requires Mg(2+) as cofactor. K(+) is required as a cofactor.

Its subcellular location is the cytoplasm. The catalysed reaction is L-methionine + ATP + H2O = S-adenosyl-L-methionine + phosphate + diphosphate. It functions in the pathway amino-acid biosynthesis; S-adenosyl-L-methionine biosynthesis; S-adenosyl-L-methionine from L-methionine: step 1/1. Functionally, catalyzes the formation of S-adenosylmethionine (AdoMet) from methionine and ATP. The overall synthetic reaction is composed of two sequential steps, AdoMet formation and the subsequent tripolyphosphate hydrolysis which occurs prior to release of AdoMet from the enzyme. The chain is S-adenosylmethionine synthase from Rhodopseudomonas palustris (strain BisB5).